Reading from the N-terminus, the 439-residue chain is MTKFPRWLAILVGLLFPLSALTQQQGLTIDIVGGNTAATPIAVLPMPYHDSAGAPATDVSGVVAADLNRSGQFRTLPLGQITERPTHGSEIRFPTWQALKQDYIVVGRVLDARQGTYRVEYELFDVRNGKRMLGLAMTARASAMRDVAHQMADAIYEKITGLRGAFFTRIAYVTASGSHGAMRYALMVADSDGYNPQTIVRSAEPLLSPDWSPDGKKLAYVSFEKGGSSIYIQDIATGSRELVSSFRGINAAPSFAPDGHRIALSLSRSGNPEIYVMDLVSKQLIQLTNSFGIDTEPVWSSDGKFIYFTSDRGGRPQIYKVASVGGTATRVTFQGNYNATASVSYDDKKIVVAQGSGNVYRIAMMDQSSGSTVWNTLSTGSLDESPSFAPNASMVLYAAREGGRGVLYAVSADARVRQRLVSVDSDVREPAWGPYRSVH.

Residues 1 to 22 form the signal peptide; it reads MTKFPRWLAILVGLLFPLSALT.

This sequence belongs to the TolB family. In terms of assembly, the Tol-Pal system is composed of five core proteins: the inner membrane proteins TolA, TolQ and TolR, the periplasmic protein TolB and the outer membrane protein Pal. They form a network linking the inner and outer membranes and the peptidoglycan layer.

Its subcellular location is the periplasm. Its function is as follows. Part of the Tol-Pal system, which plays a role in outer membrane invagination during cell division and is important for maintaining outer membrane integrity. This is Tol-Pal system protein TolB from Xylella fastidiosa (strain M12).